We begin with the raw amino-acid sequence, 85 residues long: MLFHIYHLSRFTTANKISGNYAAFCASLTKAETRSDKDAPFSTQALTRSKSKRKRSALPVANGLKKPTRSIKRPSRGERLSATTI.

Residues 35 to 85 are disordered; that stretch reads SDKDAPFSTQALTRSKSKRKRSALPVANGLKKPTRSIKRPSRGERLSATTI.

This is an uncharacterized protein from Pasteurella multocida (strain Pm70).